The chain runs to 162 residues: Ecotin (162 aa).

A signal peptide spans 1–18; the sequence is MKMFVPAVVFAASASAWA. The cysteines at positions 70 and 107 are disulfide-linked.

This sequence belongs to the protease inhibitor I11 (ecotin) family. Homodimer.

The protein resides in the periplasm. General inhibitor of pancreatic serine proteases: inhibits chymotrypsin, trypsin, elastases, factor X, kallikrein as well as a variety of other proteases. The sequence is that of Ecotin from Salmonella arizonae (strain ATCC BAA-731 / CDC346-86 / RSK2980).